The primary structure comprises 1318 residues: Guanine nucleotide exchange factor LTE1 (1318 aa).

The N-terminal Ras-GEF domain occupies 29–164 (NKNEVIQADI…CLISLKKAWL (136 aa)). Disordered regions lie at residues 694-718 (LSILPQTPTGKGSVQHKKKEKSESI) and 842-861 (IGSPETASPRKVNSNNAYSQ). Over residues 844–861 (SPETASPRKVNSNNAYSQ) the composition is skewed to polar residues. The Ras-GEF domain occupies 1073 to 1314 (ESKDVAQQFT…SQDEIEHLTA (242 aa)).

Belongs to the LTE1 family.

It is found in the cytoplasm. The protein localises to the bud. In terms of biological role, GDP-GTP exchange factor component of the mitotic exit network (MEN). Fine-tunes the timing of the mitotic exit and couples this event with cytokinesis. May also be involved in proprotein-processing in the secretory pathway. This chain is Guanine nucleotide exchange factor LTE1 (LTE1), found in Candida glabrata (strain ATCC 2001 / BCRC 20586 / JCM 3761 / NBRC 0622 / NRRL Y-65 / CBS 138) (Yeast).